The chain runs to 188 residues: Elongation factor P (188 aa).

Residue Lys-34 is modified to N6-(3,6-diaminohexanoyl)-5-hydroxylysine.

Belongs to the elongation factor P family. Post-translationally, may be beta-lysylated on the epsilon-amino group of Lys-34 by the combined action of EpmA and EpmB, and then hydroxylated on the C5 position of the same residue by EpmC (if this protein is present). Lysylation is critical for the stimulatory effect of EF-P on peptide-bond formation. The lysylation moiety may extend toward the peptidyltransferase center and stabilize the terminal 3-CCA end of the tRNA. Hydroxylation of the C5 position on Lys-34 may allow additional potential stabilizing hydrogen-bond interactions with the P-tRNA.

Its subcellular location is the cytoplasm. The protein operates within protein biosynthesis; polypeptide chain elongation. Its function is as follows. Involved in peptide bond synthesis. Alleviates ribosome stalling that occurs when 3 or more consecutive Pro residues or the sequence PPG is present in a protein, possibly by augmenting the peptidyl transferase activity of the ribosome. Modification of Lys-34 is required for alleviation. In Pseudoalteromonas translucida (strain TAC 125), this protein is Elongation factor P.